The chain runs to 259 residues: UPF0246 protein Rfer_2372 (259 aa).

It belongs to the UPF0246 family.

This is UPF0246 protein Rfer_2372 from Albidiferax ferrireducens (strain ATCC BAA-621 / DSM 15236 / T118) (Rhodoferax ferrireducens).